We begin with the raw amino-acid sequence, 110 residues long: Nucleoid-associated protein KPK_4227 (110 aa).

The interval 1–22 (MFGGKGGLGNLMKQAQQMQDKM) is disordered.

It belongs to the YbaB/EbfC family. In terms of assembly, homodimer.

It is found in the cytoplasm. Its subcellular location is the nucleoid. Its function is as follows. Binds to DNA and alters its conformation. May be involved in regulation of gene expression, nucleoid organization and DNA protection. In Klebsiella pneumoniae (strain 342), this protein is Nucleoid-associated protein KPK_4227.